A 213-amino-acid chain; its full sequence is Uridine kinase (213 aa).

ATP is bound at residue 15–22 (GASASGKS).

Belongs to the uridine kinase family.

Its subcellular location is the cytoplasm. The catalysed reaction is uridine + ATP = UMP + ADP + H(+). The enzyme catalyses cytidine + ATP = CMP + ADP + H(+). The protein operates within pyrimidine metabolism; CTP biosynthesis via salvage pathway; CTP from cytidine: step 1/3. Its pathway is pyrimidine metabolism; UMP biosynthesis via salvage pathway; UMP from uridine: step 1/1. This is Uridine kinase from Pectobacterium atrosepticum (strain SCRI 1043 / ATCC BAA-672) (Erwinia carotovora subsp. atroseptica).